Reading from the N-terminus, the 628-residue chain is Serine/threonine-protein kinase Nek11 (628 aa).

Positions 30-288 (YVLQQKLGSG…AADILKAPYM (259 aa)) constitute a Protein kinase domain. ATP contacts are provided by residues 36–44 (LGSGSFGTV) and Lys62. Asp159 (proton acceptor) is an active-site residue. Ser274 is modified (phosphoserine; by CHEK1). Residues 347-385 (WLRKLQAADERARRLKKIAEENYKENDKRMQALRSRNVG) are a coiled coil. The segment covering 452-463 (SEDSEEQEEEMI) has biased composition (acidic residues). Positions 452–475 (SEDSEEQEEEMIFSEAGGDTKEEE) are disordered.

It belongs to the protein kinase superfamily. NEK Ser/Thr protein kinase family. NIMA subfamily. In terms of assembly, interacts with NEK2. Requires Mn(2+) as cofactor. Mg(2+) serves as cofactor. In terms of processing, phosphorylated by NEK2. Phosphorylation at Ser-274 is important for its activation.

It is found in the nucleus. It localises to the nucleolus. It carries out the reaction L-seryl-[protein] + ATP = O-phospho-L-seryl-[protein] + ADP + H(+). The enzyme catalyses L-threonyl-[protein] + ATP = O-phospho-L-threonyl-[protein] + ADP + H(+). With respect to regulation, autorepressed by intramolecular binding of the C-terminus which dissociates following phosphorylation by NEK2. Activated in response to DNA damage. Inhibited by zinc. Protein kinase which plays an important role in the G2/M checkpoint response to DNA damage. Controls degradation of CDC25A by directly phosphorylating it on residues whose phosphorylation is required for BTRC-mediated polyubiquitination and degradation. This Mus musculus (Mouse) protein is Serine/threonine-protein kinase Nek11.